A 241-amino-acid polypeptide reads, in one-letter code: Probable transcriptional regulatory protein Maqu_2154 (241 aa).

It belongs to the TACO1 family.

It is found in the cytoplasm. The polypeptide is Probable transcriptional regulatory protein Maqu_2154 (Marinobacter nauticus (strain ATCC 700491 / DSM 11845 / VT8) (Marinobacter aquaeolei)).